Consider the following 109-residue polypeptide: MSDQMPFPFNNFTYFFTLFSKFFSSFHHCTCSLSVSRQYLALDGIYHPLRAAFPNNSTRRKHFTNNWDPRHTGFSPSMTSCSKEHRQGPATKLPSSNYNSDVEDARFQI.

The segment at 62–109 is disordered; it reads HFTNNWDPRHTGFSPSMTSCSKEHRQGPATKLPSSNYNSDVEDARFQI.

The protein localises to the mitochondrion. May be involved in mtDNA stability or mitochondrial gene expression regulation at the post-transcriptional level. This is Protein TAR1 (TAR1-A) from Kluyveromyces lactis (strain ATCC 8585 / CBS 2359 / DSM 70799 / NBRC 1267 / NRRL Y-1140 / WM37) (Yeast).